We begin with the raw amino-acid sequence, 389 residues long: Sterol methyltransferase-like 1 (389 aa).

Residues 25–45 (IAAGVTAAVVIGGYIWIITEL) form a helical membrane-spanning segment.

The protein belongs to the class I-like SAM-binding methyltransferase superfamily. Erg6/SMT family.

The protein localises to the microsome membrane. Its function is as follows. Unable to convert squalene, botryococcene, cycloartenol, zymosterol or lanosterol to mono-, di-, tri- or tetramethylated derivatives. This Botryococcus braunii (Green alga) protein is Sterol methyltransferase-like 1 (SMT-1).